We begin with the raw amino-acid sequence, 72 residues long: Translation initiation factor IF-1 (72 aa).

Positions 1–72 (MAKEDSIEMQ…TKGRIIFRAR (72 aa)) constitute an S1-like domain.

It belongs to the IF-1 family. In terms of assembly, component of the 30S ribosomal translation pre-initiation complex which assembles on the 30S ribosome in the order IF-2 and IF-3, IF-1 and N-formylmethionyl-tRNA(fMet); mRNA recruitment can occur at any time during PIC assembly.

The protein resides in the cytoplasm. One of the essential components for the initiation of protein synthesis. Stabilizes the binding of IF-2 and IF-3 on the 30S subunit to which N-formylmethionyl-tRNA(fMet) subsequently binds. Helps modulate mRNA selection, yielding the 30S pre-initiation complex (PIC). Upon addition of the 50S ribosomal subunit IF-1, IF-2 and IF-3 are released leaving the mature 70S translation initiation complex. The sequence is that of Translation initiation factor IF-1 from Actinobacillus succinogenes (strain ATCC 55618 / DSM 22257 / CCUG 43843 / 130Z).